A 238-amino-acid polypeptide reads, in one-letter code: Orotidine 5'-phosphate decarboxylase (238 aa).

Substrate-binding positions include D18, K40, 67-76 (DMKLLDIDNT), T122, R183, Q192, and R213. Residue K69 is the Proton donor of the active site.

This sequence belongs to the OMP decarboxylase family. Type 1 subfamily. In terms of assembly, homodimer.

It catalyses the reaction orotidine 5'-phosphate + H(+) = UMP + CO2. Its pathway is pyrimidine metabolism; UMP biosynthesis via de novo pathway; UMP from orotate: step 2/2. Its function is as follows. Catalyzes the decarboxylation of orotidine 5'-monophosphate (OMP) to uridine 5'-monophosphate (UMP). This is Orotidine 5'-phosphate decarboxylase from Brucella canis (strain ATCC 23365 / NCTC 10854 / RM-666).